Consider the following 59-residue polypeptide: Three-finger toxin MS1 (59 aa).

4 disulfide bridges follow: C3/C22, C17/C39, C41/C52, and C53/C58.

It belongs to the three-finger toxin family. Short-chain subfamily. Type I alpha-neurotoxin sub-subfamily. As to expression, expressed by the venom gland.

Its subcellular location is the secreted. Its function is as follows. Produces peripheral paralysis by blocking neuromuscular transmission at the postsynaptic site. Binds to and inhibits the endogenous nicotinic acetylcholine receptors (nAChR) in human rhabdomyosarcoma TE 671 cell line with an IC(50) of 48.2 mM. This neurotoxin is lethal to mice by intraperitoneal injection and to zebrafish by injection at the back of the dorsolateral region. The protein is Three-finger toxin MS1 of Micrurus surinamensis (Surinam coral snake).